We begin with the raw amino-acid sequence, 816 residues long: Larval serum protein 1 alpha chain (816 aa).

Residues 1-16 (MKFAIAFLACVAVVTA) form the signal peptide.

This sequence belongs to the hemocyanin family. In terms of assembly, heterohexamer, composed of three subunits, alpha, beta and gamma. In terms of tissue distribution, larval hemolymph.

It is found in the secreted. It localises to the extracellular space. Larval storage protein (LSP) which may serve as a store of amino acids for synthesis of adult proteins. The protein is Larval serum protein 1 alpha chain (Lsp1alpha) of Drosophila melanogaster (Fruit fly).